The chain runs to 933 residues: Protein translocase subunit SecA (933 aa).

ATP contacts are provided by residues glutamine 87, 105 to 109 (GEGKT), and aspartate 515. Disordered stretches follow at residues 567-588 (ESRRIDNQLRGRSGRQGDPGSS), 840-861 (DVEAVEEQRRQEAERMQMRHAA), and 880-933 (AAAE…CGKL). Over residues 845–856 (EEQRRQEAERMQ) the composition is skewed to basic and acidic residues. Residues 880 to 897 (AAAEGDSAPTGGAQQQSA) show a composition bias toward low complexity. The segment covering 905-914 (VAREGPKVGR) has biased composition (basic and acidic residues). Residues cysteine 918, cysteine 920, cysteine 929, and cysteine 930 each coordinate Zn(2+). Basic residues predominate over residues 924–933 (KKYKHCCGKL).

It belongs to the SecA family. As to quaternary structure, monomer and homodimer. Part of the essential Sec protein translocation apparatus which comprises SecA, SecYEG and auxiliary proteins SecDF-YajC and YidC. It depends on Zn(2+) as a cofactor.

Its subcellular location is the cell inner membrane. It is found in the cytoplasm. It carries out the reaction ATP + H2O + cellular proteinSide 1 = ADP + phosphate + cellular proteinSide 2.. Its function is as follows. Part of the Sec protein translocase complex. Interacts with the SecYEG preprotein conducting channel. Has a central role in coupling the hydrolysis of ATP to the transfer of proteins into and across the cell membrane, serving both as a receptor for the preprotein-SecB complex and as an ATP-driven molecular motor driving the stepwise translocation of polypeptide chains across the membrane. The chain is Protein translocase subunit SecA from Halorhodospira halophila (strain DSM 244 / SL1) (Ectothiorhodospira halophila (strain DSM 244 / SL1)).